Here is a 190-residue protein sequence, read N- to C-terminus: Glutathione peroxidase 2 (190 aa).

Residue selenocysteine 40 is part of the active site. Position 40 (selenocysteine 40) is a non-standard amino acid, selenocysteine.

This sequence belongs to the glutathione peroxidase family. As to quaternary structure, homotetramer. As to expression, mucosal epithelium of the gastrointestinal tract.

The protein resides in the cytoplasm. Its subcellular location is the cytosol. It carries out the reaction 2 glutathione + H2O2 = glutathione disulfide + 2 H2O. It catalyses the reaction a hydroperoxy polyunsaturated fatty acid + 2 glutathione = a hydroxy polyunsaturated fatty acid + glutathione disulfide + H2O. The enzyme catalyses tert-butyl hydroperoxide + 2 glutathione = tert-butanol + glutathione disulfide + H2O. The catalysed reaction is cumene hydroperoxide + 2 glutathione = 2-phenylpropan-2-ol + glutathione disulfide + H2O. It carries out the reaction (13S)-hydroperoxy-(9Z,11E)-octadecadienoate + 2 glutathione = (13S)-hydroxy-(9Z,11E)-octadecadienoate + glutathione disulfide + H2O. It catalyses the reaction (5S)-hydroperoxy-(6E,8Z,11Z,14Z)-eicosatetraenoate + 2 glutathione = (5S)-hydroxy-(6E,8Z,11Z,14Z)-eicosatetraenoate + glutathione disulfide + H2O. The enzyme catalyses (12R)-hydroperoxy-(5Z,8Z,10E,14Z)-eicosatetraenoate + 2 glutathione = (12R)-hydroxy-(5Z,8Z,10E,14Z)-eicosatetraenoate + glutathione disulfide + H2O. The catalysed reaction is (15S)-hydroperoxy-(5Z,8Z,11Z,13E)-eicosatetraenoate + 2 glutathione = (15S)-hydroxy-(5Z,8Z,11Z,13E)-eicosatetraenoate + glutathione disulfide + H2O. Catalyzes the reduction of hydroperoxides in a glutathione-dependent manner thus regulating cellular redox homeostasis. Can reduce small soluble hydroperoxide such as H2O2. Can reduce cumene hydroperoxide and tert-butyl hydroperoxide, as well as several fatty acid-derived hydroperoxides. Cannot reduce phosphatidycholine hydroperoxide. The chain is Glutathione peroxidase 2 (Gpx2) from Rattus norvegicus (Rat).